Reading from the N-terminus, the 189-residue chain is dCTP deaminase (189 aa).

Residues 112 to 117, 136 to 138, Q157, Y171, and Q181 contribute to the dCTP site; these read KSTYAR and TLE. The Proton donor/acceptor role is filled by E138.

This sequence belongs to the dCTP deaminase family. As to quaternary structure, homotrimer.

It catalyses the reaction dCTP + H2O + H(+) = dUTP + NH4(+). It participates in pyrimidine metabolism; dUMP biosynthesis; dUMP from dCTP (dUTP route): step 1/2. Catalyzes the deamination of dCTP to dUTP. In Xanthomonas campestris pv. campestris (strain 8004), this protein is dCTP deaminase.